The primary structure comprises 530 residues: Synembryn-like chaperone C3E7.04c (530 aa).

Residues 492 to 512 (SFIYHCYHSFVGPIHILLLMF) traverse the membrane as a helical segment.

This sequence belongs to the synembryn family.

The protein localises to the membrane. Functionally, chaperone that specifically binds and folds some, but not all, nascent G alpha proteins prior to G protein heterotrimer formation, promoting their stability and activity. Also acts as a guanine nucleotide exchange factor (GEF) for G alpha proteins by stimulating exchange of bound GDP for free GTP. In Schizosaccharomyces pombe (strain 972 / ATCC 24843) (Fission yeast), this protein is Synembryn-like chaperone C3E7.04c.